Here is a 390-residue protein sequence, read N- to C-terminus: 23S rRNA (uracil(747)-C(5))-methyltransferase RlmC (390 aa).

[4Fe-4S] cluster-binding residues include Cys12, Cys20, Cys23, and Cys100. Positions 225, 254, 275, and 322 each coordinate S-adenosyl-L-methionine. The active-site Nucleophile is Cys349.

It belongs to the class I-like SAM-binding methyltransferase superfamily. RNA M5U methyltransferase family. RlmC subfamily.

The catalysed reaction is uridine(747) in 23S rRNA + S-adenosyl-L-methionine = 5-methyluridine(747) in 23S rRNA + S-adenosyl-L-homocysteine + H(+). Functionally, catalyzes the formation of 5-methyl-uridine at position 747 (m5U747) in 23S rRNA. This chain is 23S rRNA (uracil(747)-C(5))-methyltransferase RlmC, found in Shewanella baltica (strain OS185).